The chain runs to 97 residues: Large ribosomal subunit protein bL28 (97 aa).

The protein belongs to the bacterial ribosomal protein bL28 family.

The sequence is that of Large ribosomal subunit protein bL28 from Rickettsia peacockii (strain Rustic).